The primary structure comprises 471 residues: Serine hydroxymethyltransferase 4 (471 aa).

Methionine 1 is subject to N-acetylmethionine. An L-serine-binding site is contributed by serine 39. 3 residues coordinate pemetrexed: serine 39, tyrosine 59, and glutamate 61. The L-serine site is built by glutamate 61 and tyrosine 69. Pemetrexed is bound by residues 105-107 (SGS), histidine 134, serine 190, and histidine 218. Residues histidine 218 and lysine 244 each coordinate L-serine. Lysine 244 bears the N6-(pyridoxal phosphate)lysine mark. Glycine 290 is a pemetrexed binding site. Lysine 373 contacts methotrexate. Arginine 389 provides a ligand contact to L-serine. Arginine 389 lines the pemetrexed pocket.

Belongs to the SHMT family. As to quaternary structure, homotetramer. Interacts with UBP16. Pyridoxal 5'-phosphate is required as a cofactor. As to expression, mostly expressed in flowers, less abundant in roots, inflorescence stems, and siliques, and barely detectable in leaves.

Its subcellular location is the cytoplasm. The enzyme catalyses (6R)-5,10-methylene-5,6,7,8-tetrahydrofolate + glycine + H2O = (6S)-5,6,7,8-tetrahydrofolate + L-serine. It participates in one-carbon metabolism; tetrahydrofolate interconversion. Inhibited by the antifolate drugs methotrexate and pemetrexed. In terms of biological role, catalyzes the interconversion of serine and glycine with the conversion of tetrahydrofolate (THF) into 5,10-methylene-THF. The sequence is that of Serine hydroxymethyltransferase 4 from Arabidopsis thaliana (Mouse-ear cress).